We begin with the raw amino-acid sequence, 434 residues long: Eukaryotic translation initiation factor 3 subunit E (434 aa).

The 174-residue stretch at 219–392 (FFNHPKGRDL…GHVVMGTQPL (174 aa)) folds into the PCI domain.

This sequence belongs to the eIF-3 subunit E family. Component of the eukaryotic translation initiation factor 3 (eIF-3) complex. The eIF-3 complex interacts with pix. Interacts with mxt.

It localises to the cytoplasm. In terms of biological role, component of the eukaryotic translation initiation factor 3 (eIF-3) complex, which is involved in protein synthesis of a specialized repertoire of mRNAs and, together with other initiation factors, stimulates binding of mRNA and methionyl-tRNAi to the 40S ribosome. The eIF-3 complex specifically targets and initiates translation of a subset of mRNAs involved in cell proliferation. This is Eukaryotic translation initiation factor 3 subunit E (eIF3-S6) from Drosophila grimshawi (Hawaiian fruit fly).